The primary structure comprises 343 residues: Probable dual-specificity RNA methyltransferase RlmN (343 aa).

Glu94 acts as the Proton acceptor in catalysis. The 231-residue stretch at 100 to 330 (YDSRVTVCVS…ATVRMSMGSD (231 aa)) folds into the Radical SAM core domain. Cys107 and Cys335 are disulfide-bonded. Positions 114, 118, and 121 each coordinate [4Fe-4S] cluster. S-adenosyl-L-methionine contacts are provided by residues 161–162 (GE), Ser193, 216–218 (SLH), and Asn292. Cys335 functions as the S-methylcysteine intermediate in the catalytic mechanism.

It belongs to the radical SAM superfamily. RlmN family. [4Fe-4S] cluster is required as a cofactor.

Its subcellular location is the cytoplasm. The catalysed reaction is adenosine(2503) in 23S rRNA + 2 reduced [2Fe-2S]-[ferredoxin] + 2 S-adenosyl-L-methionine = 2-methyladenosine(2503) in 23S rRNA + 5'-deoxyadenosine + L-methionine + 2 oxidized [2Fe-2S]-[ferredoxin] + S-adenosyl-L-homocysteine. It catalyses the reaction adenosine(37) in tRNA + 2 reduced [2Fe-2S]-[ferredoxin] + 2 S-adenosyl-L-methionine = 2-methyladenosine(37) in tRNA + 5'-deoxyadenosine + L-methionine + 2 oxidized [2Fe-2S]-[ferredoxin] + S-adenosyl-L-homocysteine. Functionally, specifically methylates position 2 of adenine 2503 in 23S rRNA and position 2 of adenine 37 in tRNAs. This Clostridioides difficile (strain 630) (Peptoclostridium difficile) protein is Probable dual-specificity RNA methyltransferase RlmN.